We begin with the raw amino-acid sequence, 355 residues long: Histidinol-phosphate aminotransferase (355 aa).

An N6-(pyridoxal phosphate)lysine modification is found at K218.

This sequence belongs to the class-II pyridoxal-phosphate-dependent aminotransferase family. Histidinol-phosphate aminotransferase subfamily. In terms of assembly, homodimer. The cofactor is pyridoxal 5'-phosphate.

It catalyses the reaction L-histidinol phosphate + 2-oxoglutarate = 3-(imidazol-4-yl)-2-oxopropyl phosphate + L-glutamate. Its pathway is amino-acid biosynthesis; L-histidine biosynthesis; L-histidine from 5-phospho-alpha-D-ribose 1-diphosphate: step 7/9. The sequence is that of Histidinol-phosphate aminotransferase from Chlorobium limicola (strain DSM 245 / NBRC 103803 / 6330).